A 347-amino-acid chain; its full sequence is Holliday junction branch migration complex subunit RuvB (347 aa).

The interval 4-186 is large ATPase domain (RuvB-L); it reads INEYGSERIV…FGMIFEMNFY (183 aa). ATP-binding positions include Leu-25, Arg-26, Gly-67, Lys-70, Thr-71, Thr-72, 133–135, Arg-176, Tyr-186, and Arg-223; that span reads EDF. Position 71 (Thr-71) interacts with Mg(2+). A small ATPAse domain (RuvB-S) region spans residues 187-257; the sequence is TQEELKMIIT…IVEEVMRLLG (71 aa). The tract at residues 260 to 347 is head domain (RuvB-H); the sequence is EFGLDEMDRK…GLFDGFGNIE (88 aa). Positions 315 and 320 each coordinate DNA.

It belongs to the RuvB family. In terms of assembly, homohexamer. Forms an RuvA(8)-RuvB(12)-Holliday junction (HJ) complex. HJ DNA is sandwiched between 2 RuvA tetramers; dsDNA enters through RuvA and exits via RuvB. An RuvB hexamer assembles on each DNA strand where it exits the tetramer. Each RuvB hexamer is contacted by two RuvA subunits (via domain III) on 2 adjacent RuvB subunits; this complex drives branch migration. In the full resolvosome a probable DNA-RuvA(4)-RuvB(12)-RuvC(2) complex forms which resolves the HJ.

It is found in the cytoplasm. It carries out the reaction ATP + H2O = ADP + phosphate + H(+). In terms of biological role, the RuvA-RuvB-RuvC complex processes Holliday junction (HJ) DNA during genetic recombination and DNA repair, while the RuvA-RuvB complex plays an important role in the rescue of blocked DNA replication forks via replication fork reversal (RFR). RuvA specifically binds to HJ cruciform DNA, conferring on it an open structure. The RuvB hexamer acts as an ATP-dependent pump, pulling dsDNA into and through the RuvAB complex. RuvB forms 2 homohexamers on either side of HJ DNA bound by 1 or 2 RuvA tetramers; 4 subunits per hexamer contact DNA at a time. Coordinated motions by a converter formed by DNA-disengaged RuvB subunits stimulates ATP hydrolysis and nucleotide exchange. Immobilization of the converter enables RuvB to convert the ATP-contained energy into a lever motion, pulling 2 nucleotides of DNA out of the RuvA tetramer per ATP hydrolyzed, thus driving DNA branch migration. The RuvB motors rotate together with the DNA substrate, which together with the progressing nucleotide cycle form the mechanistic basis for DNA recombination by continuous HJ branch migration. Branch migration allows RuvC to scan DNA until it finds its consensus sequence, where it cleaves and resolves cruciform DNA. The polypeptide is Holliday junction branch migration complex subunit RuvB (Fervidobacterium nodosum (strain ATCC 35602 / DSM 5306 / Rt17-B1)).